Consider the following 506-residue polypeptide: ATP synthase subunit alpha (506 aa).

ATP is bound at residue 170–177; it reads GDRQTGKT.

The protein belongs to the ATPase alpha/beta chains family. F-type ATPases have 2 components, CF(1) - the catalytic core - and CF(0) - the membrane proton channel. CF(1) has five subunits: alpha(3), beta(3), gamma(1), delta(1), epsilon(1). CF(0) has four main subunits: a(1), b(1), b'(1) and c(9-12).

Its subcellular location is the cellular thylakoid membrane. It catalyses the reaction ATP + H2O + 4 H(+)(in) = ADP + phosphate + 5 H(+)(out). Produces ATP from ADP in the presence of a proton gradient across the membrane. The alpha chain is a regulatory subunit. The sequence is that of ATP synthase subunit alpha from Synechococcus sp. (strain WH7803).